We begin with the raw amino-acid sequence, 44 residues long: Metallothionein-4 (44 aa).

Belongs to the metallothionein superfamily. Type 5 family.

Functionally, this protein binds cations of several transition elements. Thought to be involved in metal ion homeostasis. The polypeptide is Metallothionein-4 (MtnD) (Drosophila melanogaster (Fruit fly)).